A 172-amino-acid polypeptide reads, in one-letter code: Co-chaperone protein HscB (172 aa).

The J domain maps to 2 to 74; that stretch reads DYFTLFGLPI…LKRAEYMLSL (73 aa).

Belongs to the HscB family. Interacts with HscA and stimulates its ATPase activity. Interacts with IscU.

Its function is as follows. Co-chaperone involved in the maturation of iron-sulfur cluster-containing proteins. Seems to help targeting proteins to be folded toward HscA. This Pectobacterium atrosepticum (strain SCRI 1043 / ATCC BAA-672) (Erwinia carotovora subsp. atroseptica) protein is Co-chaperone protein HscB.